The chain runs to 177 residues: Nucleoside triphosphate/diphosphate phosphatase (177 aa).

The active-site Proton donor is Arg23. 6 residues coordinate Mg(2+): Asn87, Asp103, Asp105, Asp107, Asp120, and Glu123.

Belongs to the Ntdp family. Mg(2+) serves as cofactor.

The catalysed reaction is a ribonucleoside 5'-triphosphate + H2O = a ribonucleoside 5'-diphosphate + phosphate + H(+). The enzyme catalyses a ribonucleoside 5'-diphosphate + H2O = a ribonucleoside 5'-phosphate + phosphate + H(+). Has nucleoside phosphatase activity towards nucleoside triphosphates and nucleoside diphosphates. The chain is Nucleoside triphosphate/diphosphate phosphatase from Streptococcus uberis (strain ATCC BAA-854 / 0140J).